The sequence spans 512 residues: GMP synthase [glutamine-hydrolyzing] (512 aa).

Positions 7–197 (TIIVLDFGSQ…VFGVCGCSEG (191 aa)) constitute a Glutamine amidotransferase type-1 domain. The Nucleophile role is filled by Cys-84. Active-site residues include His-171 and Glu-173. The GMPS ATP-PPase domain maps to 198 to 387 (WNMENFIEVE…LGIPDEIVWR (190 aa)). 225 to 231 (SGGVDSS) serves as a coordination point for ATP.

In terms of assembly, homodimer.

The catalysed reaction is XMP + L-glutamine + ATP + H2O = GMP + L-glutamate + AMP + diphosphate + 2 H(+). Its pathway is purine metabolism; GMP biosynthesis; GMP from XMP (L-Gln route): step 1/1. In terms of biological role, catalyzes the synthesis of GMP from XMP. In Bacillus cereus (strain B4264), this protein is GMP synthase [glutamine-hydrolyzing].